The primary structure comprises 242 residues: Small ribosomal subunit protein uS3 (242 aa).

A KH type-2 domain is found at 39-110; that stretch reads IRKFIHKKYG…QVRINVVEVE (72 aa). The disordered stretch occupies residues 216 to 242; sequence QTMPVGANPRRRASRRPQQFEDRSNEG. Positions 233–242 are enriched in basic and acidic residues; that stretch reads QQFEDRSNEG.

The protein belongs to the universal ribosomal protein uS3 family. As to quaternary structure, part of the 30S ribosomal subunit. Forms a tight complex with proteins S10 and S14.

Binds the lower part of the 30S subunit head. Binds mRNA in the 70S ribosome, positioning it for translation. This Synechococcus sp. (strain CC9902) protein is Small ribosomal subunit protein uS3.